Here is a 131-residue protein sequence, read N- to C-terminus: Transcription antitermination protein NusB (131 aa).

The protein belongs to the NusB family.

Functionally, involved in transcription antitermination. Required for transcription of ribosomal RNA (rRNA) genes. Binds specifically to the boxA antiterminator sequence of the ribosomal RNA (rrn) operons. The protein is Transcription antitermination protein NusB of Campylobacter concisus (strain 13826).